Reading from the N-terminus, the 233-residue chain is VIGGVECNINEHGFLALLYSRRFQCGGTLINEEWVLTAAHCDMRNMYIYLGVHNVSVQYDDEQRRYPKKKYFCLSSRNYNQWDKDIMLIRLNRPVRNSAHIAPLSLPSNPPSVGSVCRVMGWGTITSPQETLPDVPHCANINILDYEVCRAAYPELPVTRRTLCAGILEGGKDSCNGDSGGPLICNGQFQGIAYWGADTCAQPREPGLYTKVFDYTDWIQSIISGNTDATCPQ.

Residues 1–224 enclose the Peptidase S1 domain; that stretch reads VIGGVECNIN…YTDWIQSIIS (224 aa). 6 disulfide bridges follow: cysteine 7/cysteine 138, cysteine 25/cysteine 41, cysteine 73/cysteine 231, cysteine 117/cysteine 185, cysteine 149/cysteine 164, and cysteine 175/cysteine 200. The active-site Charge relay system is histidine 40. Asparagine 54 is a glycosylation site (N-linked (GlcNAc...) asparagine). Aspartate 85 serves as the catalytic Charge relay system. The Charge relay system role is filled by serine 179.

Belongs to the peptidase S1 family. Snake venom subfamily. Monomer. As to expression, expressed by the venom gland.

It localises to the secreted. Functionally, snake venom serine protease that may act in the hemostasis system of the prey. This Gloydius ussuriensis (Ussuri mamushi) protein is Snake venom serine protease ussurase.